The chain runs to 434 residues: Glutamate/glutamine/aspartate/asparagine transport system permease protein BztC (434 aa).

10 consecutive transmembrane segments (helical) span residues 41–61 (LTVF…PWLL), 113–133 (LFVT…DALP), 135–155 (KLIW…WGGP), 156–176 (IWGP…FTAL), 180–200 (LGVP…WLYA), 227–247 (FLLA…LGIL), 272–292 (GVPL…FLPP), 298–318 (LILR…AEVI), 360–380 (IVSS…VGLF), and 398–418 (GTYW…NFSM). Residues 227–422 (FLLALVIGVT…LFNFSMSRYS (196 aa)) enclose the ABC transmembrane type-1 domain.

Belongs to the binding-protein-dependent transport system permease family. HisMQ subfamily. BztB and BztC form a heterodimer which can form a membrane complex with a homodimer of BztD.

It is found in the cell inner membrane. In terms of biological role, part of a binding-protein-dependent transport system for glutamate, glutamine, aspartate and asparagine. Probably responsible for the translocation of the substrate across the membrane. In Rhodobacter capsulatus (strain ATCC BAA-309 / NBRC 16581 / SB1003), this protein is Glutamate/glutamine/aspartate/asparagine transport system permease protein BztC (bztC).